Reading from the N-terminus, the 272-residue chain is Cytochrome b-c1 complex subunit Rieske-1, mitochondrial (272 aa).

The transit peptide at 1 to 60 directs the protein to the mitochondrion; it reads MLRVAGRRLFSVSQRSSTATSFVVSRDHTLSDGGGDSSSAPRSLPSADLSSYHRSLIRGF. The interval 27 to 46 is disordered; the sequence is DHTLSDGGGDSSSAPRSLPS. Residues 61–109 lie on the Mitochondrial matrix side of the membrane; the sequence is SSQVLAQGNEIGFGSEVPATVEAVKTPNSKIVYDDHNHERYPPGDPSKR. The helical transmembrane segment at 110-132 threads the bilayer; it reads AFAYFVLSGGRFVYASVLRLLVL. The Mitochondrial intermembrane segment spans residues 133-272; the sequence is KLIVSMSASK…FLEENKLLIG (140 aa). The Rieske domain occupies 201 to 270; that stretch reads VRVKNPEWLV…YSFLEENKLL (70 aa). [2Fe-2S] cluster is bound by residues Cys215, His217, Cys234, and His237. Cys220 and Cys236 are oxidised to a cystine.

It belongs to the Rieske iron-sulfur protein family. As to quaternary structure, component of the ubiquinol-cytochrome c oxidoreductase (cytochrome b-c1 complex, complex III, CIII), a multisubunit enzyme composed of 10 subunits. The complex is composed of 3 respiratory subunits cytochrome b (MT-CYB), cytochrome c1 (CYC1-1 or CYC1-2) and Rieske protein (UCR1-1 or UCR1-2), 2 core protein subunits MPPalpha1 (or MPPalpha2) and MPPB, and 5 low-molecular weight protein subunits QCR7-1 (or QCR7-2), UCRQ-1 (or UCRQ-2), QCR9, UCRY and probably QCR6-1 (or QCR6-2). The complex exists as an obligatory dimer and forms supercomplexes (SCs) in the inner mitochondrial membrane with NADH-ubiquinone oxidoreductase (complex I, CI), resulting in different assemblies (supercomplexes SCI(1)III(2) and SCI(2)III(4)). The cofactor is [2Fe-2S] cluster.

The protein resides in the mitochondrion inner membrane. The enzyme catalyses a quinol + 2 Fe(III)-[cytochrome c](out) = a quinone + 2 Fe(II)-[cytochrome c](out) + 2 H(+)(out). Component of the ubiquinol-cytochrome c oxidoreductase, a multisubunit transmembrane complex that is part of the mitochondrial electron transport chain which drives oxidative phosphorylation. The respiratory chain contains 3 multisubunit complexes succinate dehydrogenase (complex II, CII), ubiquinol-cytochrome c oxidoreductase (cytochrome b-c1 complex, complex III, CIII) and cytochrome c oxidase (complex IV, CIV), that cooperate to transfer electrons derived from NADH and succinate to molecular oxygen, creating an electrochemical gradient over the inner membrane that drives transmembrane transport and the ATP synthase. The cytochrome b-c1 complex catalyzes electron transfer from ubiquinol to cytochrome c, linking this redox reaction to translocation of protons across the mitochondrial inner membrane, with protons being carried across the membrane as hydrogens on the quinol. In the process called Q cycle, 2 protons are consumed from the matrix, 4 protons are released into the intermembrane space and 2 electrons are passed to cytochrome c. The Rieske protein is a catalytic core subunit containing a [2Fe-2S] iron-sulfur cluster. It cycles between 2 conformational states during catalysis to transfer electrons from the quinol bound in the Q(0) site in cytochrome b to cytochrome c1. This Arabidopsis thaliana (Mouse-ear cress) protein is Cytochrome b-c1 complex subunit Rieske-1, mitochondrial.